The following is a 220-amino-acid chain: Putative vesicle-associated membrane protein 726 (220 aa).

The Cytoplasmic portion of the chain corresponds to 1–196; that stretch reads MGQQSLIYSF…LWFENMKIKL (196 aa). Residues 10 to 114 form the Longin domain; sequence FVARGTVILA…SLNKEFGSKL (105 aa). The 61-residue stretch at 130-190 folds into the v-SNARE coiled-coil homology domain; sequence KLSKVKAQVT…TKMKRKLWFE (61 aa). A helical; Anchor for type IV membrane protein membrane pass occupies residues 197-217; it reads IVFGIIVALILIIILSVCHGF. Residues 218–220 lie on the Vesicular side of the membrane; that stretch reads KCT.

This sequence belongs to the synaptobrevin family. In terms of tissue distribution, expressed in flowers, leaves, stems and roots.

The protein resides in the cell membrane. The protein localises to the early endosome membrane. Its function is as follows. Involved in the targeting and/or fusion of transport vesicles to their target membrane. The protein is Putative vesicle-associated membrane protein 726 (VAMP726) of Arabidopsis thaliana (Mouse-ear cress).